Reading from the N-terminus, the 684-residue chain is Coiled-coil domain-containing protein 62 (684 aa).

Coiled-coil stretches lie at residues 11–160 (RQNI…QALT) and 199–322 (TCIV…ESKA). The interval 579-603 (SLGSSKSALREDETESSSNKKNSPT) is disordered. The span at 594 to 603 (SSSNKKNSPT) shows a compositional bias: polar residues. 2 consecutive short sequence motifs (LXXLL motif) follow at residues 634 to 638 (LQRLL) and 650 to 654 (LSTLL). Residues 657-684 (SHENLTGSATNKSEVPEESAQKNTFVSY) form a disordered region. The segment covering 659–669 (ENLTGSATNKS) has biased composition (polar residues).

In terms of assembly, interacts with ESR1 and ESR2 in the presence of estradiol/E2. The interaction with ESR2 recruits CCDC62 to ER target genes, including cyclin-D1/CCND1 AP-1 promoter. Interacts with GOPC. As to expression, highly expressed in adult testis. Expressed in both prostate epithelial and stromal cells, with predominant expression in epithelial cells (at protein level). Not detected in prostate by RT-PCR. Overexpressed in various cancers.

It localises to the cytoplasm. The protein resides in the nucleus. It is found in the cytoplasmic vesicle. The protein localises to the secretory vesicle. Its subcellular location is the acrosome. In terms of biological role, nuclear receptor coactivator that can enhance preferentially estrogen receptors ESR1 and ESR2 transactivation. Also modulates progesterone/PGR, glucocorticoid/NR3C1 and androgen/AR receptors transactivation, although at lower level; little effect on vitamin D receptor/VDR. Required for normal spermiogenesis. It probably plays a role in acrosome formation. In Homo sapiens (Human), this protein is Coiled-coil domain-containing protein 62 (CCDC62).